Reading from the N-terminus, the 791-residue chain is Calcium-transporting ATPase CtpE (791 aa).

Transmembrane regions (helical) follow at residues 53-73, 213-233, and 252-272; these read LFVI…LLII, ILQF…YTQL, and VPMV…VGVV. Asp299 functions as the 4-aspartylphosphate intermediate in the catalytic mechanism. Mg(2+)-binding residues include Asp299, Thr301, and Asp530. 6 helical membrane-spanning segments follow: residues 596–616, 627–647, 664–684, 697–717, 725–745, and 757–777; these read VYSV…KIFG, IHVT…LSLA, AALP…LVAY, ASTA…AVVA, VLLV…PLAQ, and VTSV…VLWW.

The protein belongs to the cation transport ATPase (P-type) (TC 3.A.3) family.

The protein resides in the cell membrane. The enzyme catalyses Ca(2+)(in) + ATP + H2O = Ca(2+)(out) + ADP + phosphate + H(+). Its function is as follows. P-type ATPase involved in specific uptake of calcium. Essential for growth and maintenance of cell surface integrity under Ca(2+)-deficient conditions. The polypeptide is Calcium-transporting ATPase CtpE (Mycolicibacterium smegmatis (strain ATCC 700084 / mc(2)155) (Mycobacterium smegmatis)).